The following is a 547-amino-acid chain: Glucose-6-phosphate isomerase (547 aa).

Residue Glu-353 is the Proton donor of the active site. Residues His-384 and Lys-512 contribute to the active site.

Belongs to the GPI family.

The protein resides in the cytoplasm. It catalyses the reaction alpha-D-glucose 6-phosphate = beta-D-fructose 6-phosphate. It participates in carbohydrate biosynthesis; gluconeogenesis. It functions in the pathway carbohydrate degradation; glycolysis; D-glyceraldehyde 3-phosphate and glycerone phosphate from D-glucose: step 2/4. Functionally, catalyzes the reversible isomerization of glucose-6-phosphate to fructose-6-phosphate. The sequence is that of Glucose-6-phosphate isomerase from Campylobacter jejuni subsp. doylei (strain ATCC BAA-1458 / RM4099 / 269.97).